The chain runs to 160 residues: Cytochrome b6-f complex subunit 4 (160 aa).

3 helical membrane-spanning segments follow: residues 36–56, 95–115, and 131–151; these read LLYIFPVVILGTIACNVGLAV, LLGVLLMVSVPTGLLTVPFLE, and TVFLIGTAVALWLGIGATLPI.

Belongs to the cytochrome b family. PetD subfamily. In terms of assembly, the 4 large subunits of the cytochrome b6-f complex are cytochrome b6, subunit IV (17 kDa polypeptide, petD), cytochrome f and the Rieske protein, while the 4 small subunits are petG, petL, petM and petN. The complex functions as a dimer.

It localises to the plastid. The protein resides in the chloroplast thylakoid membrane. Its function is as follows. Component of the cytochrome b6-f complex, which mediates electron transfer between photosystem II (PSII) and photosystem I (PSI), cyclic electron flow around PSI, and state transitions. This Oryza sativa (Rice) protein is Cytochrome b6-f complex subunit 4.